Consider the following 657-residue polypeptide: Penicillin-binding protein activator LpoA (657 aa).

Positions 1-25 are cleaved as a signal peptide; it reads MLSSTFVRSKAGLVPVILAALILAA. The N-palmitoyl cysteine moiety is linked to residue C26. C26 carries the S-diacylglycerol cysteine lipid modification.

It belongs to the LpoA family. In terms of assembly, interacts with PBP1a.

Its subcellular location is the cell outer membrane. Functionally, regulator of peptidoglycan synthesis that is essential for the function of penicillin-binding protein 1A (PBP1a). The sequence is that of Penicillin-binding protein activator LpoA from Yersinia pseudotuberculosis serotype O:1b (strain IP 31758).